The sequence spans 194 residues: Adenylate kinase isoenzyme 1 (194 aa).

N-acetylmethionine is present on Met1. 18 to 23 is an ATP binding site; the sequence is GSGKGT. A Phosphoserine modification is found at Ser38. An NMP region spans residues 38 to 67; it reads STGDLLRAEVSSGSSRGKMLSSIMEKGELV. Residues Thr39, Arg44, 65–67, 94–97, and Gln101 contribute to the AMP site; these read ELV and GYPR. Positions 131–141 are LID; it reads KRGETSGRVDD. Position 132 (Arg132) interacts with ATP. Residues Arg138 and Arg149 each contribute to the AMP site. Gly177 contributes to the ATP binding site.

This sequence belongs to the adenylate kinase family. AK1 subfamily. In terms of assembly, monomer. It depends on Mg(2+) as a cofactor.

The protein localises to the cytoplasm. It carries out the reaction a ribonucleoside 5'-phosphate + ATP = a ribonucleoside 5'-diphosphate + ADP. The enzyme catalyses AMP + ATP = 2 ADP. The catalysed reaction is dAMP + ATP = dADP + ADP. It catalyses the reaction dATP + AMP = dADP + ADP. It carries out the reaction dAMP + dATP = 2 dADP. The enzyme catalyses a 2'-deoxyribonucleoside 5'-diphosphate + ATP = a 2'-deoxyribonucleoside 5'-triphosphate + ADP. The catalysed reaction is a ribonucleoside 5'-diphosphate + ATP = a ribonucleoside 5'-triphosphate + ADP. It catalyses the reaction CDP + GTP = CTP + GDP. It carries out the reaction GDP + ATP = GTP + ADP. The enzyme catalyses UDP + ATP = UTP + ADP. The catalysed reaction is GTP + UDP = UTP + GDP. It catalyses the reaction dTDP + GTP = dTTP + GDP. It carries out the reaction dCDP + GTP = dCTP + GDP. The enzyme catalyses dGDP + ATP = dGTP + ADP. The catalysed reaction is dADP + GTP = dATP + GDP. It catalyses the reaction thiamine diphosphate + ADP = thiamine triphosphate + AMP. Its function is as follows. Catalyzes the reversible transfer of the terminal phosphate group between ATP and AMP. Also displays broad nucleoside diphosphate kinase activity. Plays an important role in cellular energy homeostasis and in adenine nucleotide metabolism. Also catalyzes at a very low rate the synthesis of thiamine triphosphate (ThTP) from thiamine diphosphate (ThDP) and ADP. This Rattus norvegicus (Rat) protein is Adenylate kinase isoenzyme 1 (Ak1).